A 314-amino-acid chain; its full sequence is Olfactory receptor-like protein I9 (314 aa).

Over 1-25 the chain is Extracellular; that stretch reads MTRRNQTAISQFFLLGLPFPPEYQH. Asn-5 carries N-linked (GlcNAc...) asparagine glycosylation. The helical transmembrane segment at 26 to 50 threads the bilayer; that stretch reads LFYALFLAMYLTTLLGNLIIIILIL. At 51–57 the chain is on the cytoplasmic side; it reads LDSHLHT. The chain crosses the membrane as a helical span at residues 58 to 79; that stretch reads PMYLFLSNLSFADLCFSSVTMP. The Extracellular portion of the chain corresponds to 80–100; that stretch reads KLLQNMQSQVPSIPYAGCLAQ. An intrachain disulfide couples Cys-97 to Cys-189. The helical transmembrane segment at 101 to 120 threads the bilayer; the sequence is IYFFLFFGDLGNFLLVAMAY. Topologically, residues 121 to 139 are cytoplasmic; it reads DRYVAICFPLHYMSIMSPK. The helical transmembrane segment at 140-158 threads the bilayer; sequence LCVSLVVLSWVLTTFHAML. The Extracellular segment spans residues 159–196; sequence HTLLMARLSFCEDSVIPHYFCDMSTLLKVACSDTHDNE. A helical transmembrane segment spans residues 197 to 219; that stretch reads LAIFILGGPIVVLPFLLIIVSYA. The Cytoplasmic portion of the chain corresponds to 220-236; it reads RIVSSIFKVPSSQSIHK. A helical membrane pass occupies residues 237–260; sequence AFSTCGSHLSVVSLFYGTVIGLYL. Topologically, residues 261–272 are extracellular; it reads CPSANNSTVKET. A helical transmembrane segment spans residues 273-292; sequence VMSLMYTMVTPMLNPFIYSL. The Cytoplasmic segment spans residues 293-314; it reads RNRDIKDALEKIMCKKQIPSFL.

It belongs to the G-protein coupled receptor 1 family. In terms of tissue distribution, olfactory epithelium.

Its subcellular location is the cell membrane. In terms of biological role, odorant receptor. In Rattus norvegicus (Rat), this protein is Olfactory receptor-like protein I9.